A 415-amino-acid polypeptide reads, in one-letter code: Putative serine/threonine-protein phosphatase 4 regulatory subunit 1-like (415 aa).

HEAT repeat units lie at residues 86-124 (VMEI…SNFP), 163-202 (LLPR…TEKF), 203-241 (LIPK…RRTQ), and 242-280 (LFPL…RAGL). Positions 301 to 318 (FASGSPAPSSGGNTSPAS) are enriched in low complexity. The interval 301-362 (FASGSPAPSS…GPAESPVESC (62 aa)) is disordered.

In terms of biological role, may be a regulatory subunit of serine/threonine-protein phosphatase 4. The polypeptide is Putative serine/threonine-protein phosphatase 4 regulatory subunit 1-like (PPP4R1L) (Homo sapiens (Human)).